Here is a 249-residue protein sequence, read N- to C-terminus: Chromosome-partitioning ATPase Soj (249 aa).

The ATP site is built by Lys15, Gly16, Gly17, Val18, Gly19, Lys20, Thr21, Thr22, Pro207, and Asn209. ADP is bound at residue Gly17. ADP-binding residues include Gly19, Lys20, Thr21, Thr22, Pro207, and Asn209. A Mg(2+)-binding site is contributed by Thr21.

This sequence belongs to the ParA family. Monomer in the absence of nucleotides or presence of ADP, in the presence of ATP is found in a monomer-dimer equilibrium. ATP-binding is required for DNA-binding. Probably interacts with Spo0J.

It catalyses the reaction ATP + H2O = ADP + phosphate + H(+). With respect to regulation, ATPase activity is stimulated 10-fold in the presence of Spo0J and parS DNA (a plasmid centromere-like site or plasmid DNA itself). The first 20 residues of Spo0J stimulate its ATPase activity by 8%. In terms of biological role, ATPase probably involved in chromosome partitioning. Cooperatively binds dsDNA, forming nucleoprotein filaments in a strictly ATP-dependent fashion. Can also bind ssDNA with lower affinity. The protein is Chromosome-partitioning ATPase Soj of Thermus thermophilus (strain ATCC BAA-163 / DSM 7039 / HB27).